A 244-amino-acid chain; its full sequence is Sortase B (244 aa).

The Cytoplasmic portion of the chain corresponds to 1–6 (MRMKRF). A helical transmembrane segment spans residues 7–24 (LTIVQILLVVIIIIFGYK). The Extracellular portion of the chain corresponds to 25–244 (IVQTYIEDKQ…VVVAKIIKVS (220 aa)). Cysteine 223 (acyl-thioester intermediate) is an active-site residue.

Belongs to the bacterial sortase family. Class B subfamily.

The protein localises to the cell membrane. The catalysed reaction is The enzyme catalyzes a cell wall sorting reaction in which a surface protein with a sorting signal containing a NPXTN motif is cleaved between the Thr and Asn residue. The resulting threonine carboxyl end of the protein is covalently attached to a pentaglycine cross-bridge of peptidoglycan.. With respect to regulation, inhibited by MTSET (2-(Trimethylammonium)-ethyl-methanethiosulfonate) and E64 ([n- (l-3-trans-carboxyoxirane-2-carbonyl)-l-leucyl]-amido(4-guanido)butane). Inhibited by coptisine. In terms of biological role, transpeptidase that anchors surface proteins to the cell wall. Recognizes and modifies its substrate by proteolytic cleavage of a C-terminal sorting signal. Following cleavage, a covalent intermediate is formed via a thioester bond between the sortase and its substrate, which is then transferred and covalently attached to the cell wall. This sortase recognizes an Asn-Pro-Gln-Thr-Asn (NPQTN) motif in IsdC, which is cleaved by the sortase between the threonine and aspargine residues; may only have 1 substrate in this bacterium. May be dedicated to the process of iron acquisition during bacterial infection. In Staphylococcus aureus (strain NCTC 8325 / PS 47), this protein is Sortase B.